Consider the following 91-residue polypeptide: Defensin-like protein 82 (91 aa).

The first 27 residues, 1 to 27 (MAIKKFSSLLLPLLMVLALVVLPIISG), serve as a signal peptide directing secretion. Cystine bridges form between Cys-34–Cys-72, Cys-41–Cys-62, Cys-47–Cys-70, and Cys-51–Cys-71.

This sequence belongs to the DEFL family.

Its subcellular location is the secreted. The polypeptide is Defensin-like protein 82 (Arabidopsis thaliana (Mouse-ear cress)).